We begin with the raw amino-acid sequence, 615 residues long: Chaperone protein HscA homolog (615 aa).

Belongs to the heat shock protein 70 family.

In terms of biological role, chaperone involved in the maturation of iron-sulfur cluster-containing proteins. Has a low intrinsic ATPase activity which is markedly stimulated by HscB. This chain is Chaperone protein HscA homolog, found in Aeromonas salmonicida (strain A449).